Here is a 434-residue protein sequence, read N- to C-terminus: Perilipin-3 (434 aa).

The interval 1-22 (MSADGAEADGSTQVTVEEPVQQ) is disordered. Ser-2 is subject to N-acetylserine. Ser-31 is subject to Phosphoserine. Lys-65 is modified (N6-acetyllysine). Ser-91 carries the phosphoserine modification. Residue Lys-122 forms a Glycyl lysine isopeptide (Lys-Gly) (interchain with G-Cter in SUMO1) linkage. A phosphoserine mark is found at Ser-130 and Ser-148. Thr-170 is subject to Phosphothreonine. Phosphoserine is present on residues Ser-175 and Ser-179. Position 216 is a phosphothreonine (Thr-216). Residues Ser-217 and Ser-241 each carry the phosphoserine modification. Phosphotyrosine is present on Tyr-251. 2 coiled-coil regions span residues 252–280 (EHSL…SLME) and 353–377 (TNVK…SSIH).

This sequence belongs to the perilipin family. Homooligomer. Interacts with M6PR (via the cytoplasmic domain). Interacts with IGF2R (via the cytoplasmic domain). Phosphorylation at Tyr-251 by isoform 1 of CHKA (CHKalpha2) promotes dissociation from lipid droplets: dissociation is followed by recruitment of autophagosome machinery to lipid droplets and subsequent lipid droplet lipolysis.

Its subcellular location is the lipid droplet. The protein resides in the endosome membrane. It localises to the cytoplasm. In terms of biological role, structural component of lipid droplets, which is required for the formation and maintenance of lipid storage droplets. Required for the transport of mannose 6-phosphate receptors (MPR) from endosomes to the trans-Golgi network. The sequence is that of Perilipin-3 (PLIN3) from Pongo abelii (Sumatran orangutan).